Reading from the N-terminus, the 272-residue chain is 2-amino-3,7-dideoxy-D-threo-hept-6-ulosonate synthase (272 aa).

Asp-33 serves as the catalytic Proton acceptor. Residues 33 to 37 (DHGVS) and 153 to 155 (YPR) each bind 1-deoxy-D-threo-hexo-2,5-diulose 6-phosphate. Catalysis depends on Tyr-153, which acts as the Proton donor. Catalysis depends on Lys-184, which acts as the Schiff-base intermediate with substrate. 1-deoxy-D-threo-hexo-2,5-diulose 6-phosphate-binding positions include 209–210 (GG) and 237–238 (GR).

Belongs to the DeoC/FbaB aldolase family. ADHS subfamily. Homodecamer.

It carries out the reaction 1-deoxy-D-threo-hexo-2,5-diulose 6-phosphate + L-aspartate 4-semialdehyde = 2,3-dioxopropyl phosphate + 2-amino-2,3,7-trideoxy-D-lyxo-hept-6-ulosonate. Catalyzes a transaldol reaction between 6-deoxy-5-ketofructose 1-phosphate (DKFP) and L-aspartate semialdehyde (ASA) with an elimination of hydroxypyruvaldehyde phosphate to yield 2-amino-3,7-dideoxy-D-threo-hept-6-ulosonate (ADH). Plays a key role in an alternative pathway of the biosynthesis of 3-dehydroquinate (DHQ), which is involved in the canonical pathway for the biosynthesis of aromatic amino acids. In Methanococcus vannielii (strain ATCC 35089 / DSM 1224 / JCM 13029 / OCM 148 / SB), this protein is 2-amino-3,7-dideoxy-D-threo-hept-6-ulosonate synthase.